The chain runs to 278 residues: Potassium/proton antiporter CemA (278 aa).

4 helical membrane passes run 61-81 (LIVL…FIIG), 155-175 (AIKN…LIVL), 203-223 (IILF…EVVI), and 238-258 (FIFL…KYWI).

This sequence belongs to the CemA family.

The protein resides in the plastid. It localises to the chloroplast inner membrane. It carries out the reaction K(+)(in) + H(+)(out) = K(+)(out) + H(+)(in). Its function is as follows. Contributes to K(+)/H(+) antiport activity by supporting proton efflux to control proton extrusion and homeostasis in chloroplasts in a light-dependent manner to modulate photosynthesis. Prevents excessive induction of non-photochemical quenching (NPQ) under continuous-light conditions. Indirectly promotes efficient inorganic carbon uptake into chloroplasts. The protein is Potassium/proton antiporter CemA of Cyanidium caldarium (Red alga).